Here is a 63-residue protein sequence, read N- to C-terminus: Large ribosomal subunit protein bL35 (63 aa).

The protein belongs to the bacterial ribosomal protein bL35 family.

This is Large ribosomal subunit protein bL35 from Finegoldia magna (strain ATCC 29328 / DSM 20472 / WAL 2508) (Peptostreptococcus magnus).